Consider the following 204-residue polypeptide: Holliday junction branch migration complex subunit RuvA (204 aa).

Residues 1 to 64 are domain I; that stretch reads MIARLRGTLL…EDGQTLFGFR (64 aa). The interval 65-143 is domain II; the sequence is TRAERDLFRR…GVGGGSTAAP (79 aa). Residues 144-153 are flexible linker; the sequence is AAGADHPTGE. The tract at residues 153–204 is domain III; sequence ENDPVSEAIEGLVALGYKPPEAARMARNAAEPELGCEAIIRRALQRAVPRGG.

It belongs to the RuvA family. Homotetramer. Forms an RuvA(8)-RuvB(12)-Holliday junction (HJ) complex. HJ DNA is sandwiched between 2 RuvA tetramers; dsDNA enters through RuvA and exits via RuvB. An RuvB hexamer assembles on each DNA strand where it exits the tetramer. Each RuvB hexamer is contacted by two RuvA subunits (via domain III) on 2 adjacent RuvB subunits; this complex drives branch migration. In the full resolvosome a probable DNA-RuvA(4)-RuvB(12)-RuvC(2) complex forms which resolves the HJ.

The protein resides in the cytoplasm. Functionally, the RuvA-RuvB-RuvC complex processes Holliday junction (HJ) DNA during genetic recombination and DNA repair, while the RuvA-RuvB complex plays an important role in the rescue of blocked DNA replication forks via replication fork reversal (RFR). RuvA specifically binds to HJ cruciform DNA, conferring on it an open structure. The RuvB hexamer acts as an ATP-dependent pump, pulling dsDNA into and through the RuvAB complex. HJ branch migration allows RuvC to scan DNA until it finds its consensus sequence, where it cleaves and resolves the cruciform DNA. The chain is Holliday junction branch migration complex subunit RuvA from Halorhodospira halophila (strain DSM 244 / SL1) (Ectothiorhodospira halophila (strain DSM 244 / SL1)).